Reading from the N-terminus, the 133-residue chain is Small ribosomal subunit protein uS11 (133 aa).

Belongs to the universal ribosomal protein uS11 family. Part of the 30S ribosomal subunit. Interacts with proteins S7 and S18. Binds to IF-3.

In terms of biological role, located on the platform of the 30S subunit, it bridges several disparate RNA helices of the 16S rRNA. Forms part of the Shine-Dalgarno cleft in the 70S ribosome. The polypeptide is Small ribosomal subunit protein uS11 (Bordetella petrii (strain ATCC BAA-461 / DSM 12804 / CCUG 43448)).